Here is a 310-residue protein sequence, read N- to C-terminus: HPr kinase/phosphorylase (310 aa).

Catalysis depends on residues H138 and K159. 153–160 (GKSGVGKS) serves as a coordination point for ATP. S160 is a Mg(2+) binding site. The Proton acceptor; for phosphorylation activity. Proton donor; for dephosphorylation activity role is filled by D177. Positions 201–210 (LEIRGLGIIN) are important for the catalytic mechanism of both phosphorylation and dephosphorylation. E202 lines the Mg(2+) pocket. The active site involves R243. The interval 264–269 (PVRPGR) is important for the catalytic mechanism of dephosphorylation.

The protein belongs to the HPrK/P family. As to quaternary structure, homohexamer. Mg(2+) serves as cofactor.

The catalysed reaction is [HPr protein]-L-serine + ATP = [HPr protein]-O-phospho-L-serine + ADP + H(+). It carries out the reaction [HPr protein]-O-phospho-L-serine + phosphate + H(+) = [HPr protein]-L-serine + diphosphate. In terms of biological role, catalyzes the ATP- as well as the pyrophosphate-dependent phosphorylation of a specific serine residue in HPr, a phosphocarrier protein of the phosphoenolpyruvate-dependent sugar phosphotransferase system (PTS). HprK/P also catalyzes the pyrophosphate-producing, inorganic phosphate-dependent dephosphorylation (phosphorolysis) of seryl-phosphorylated HPr (P-Ser-HPr). The two antagonistic activities of HprK/P are regulated by several intracellular metabolites, which change their concentration in response to the absence or presence of rapidly metabolisable carbon sources (glucose, fructose, etc.) in the growth medium. Also phosphorylates/dephosphorylates the HPr-like catabolite repression protein crh on a specific serine residue. Therefore, by controlling the phosphorylation state of HPr and crh, HPrK/P is a sensor enzyme that plays a major role in the regulation of carbon metabolism and sugar transport: it mediates carbon catabolite repression (CCR), and regulates PTS-catalyzed carbohydrate uptake and inducer exclusion. The protein is HPr kinase/phosphorylase of Bacillus pumilus (strain SAFR-032).